Here is a 543-residue protein sequence, read N- to C-terminus: Kelch repeat and BTB domain-containing protein 4 (543 aa).

The BTB domain maps to 70–137; that stretch reads ADVTISVEGR…IYHGTVKLRA (68 aa). The BACK domain occupies 172-264; that stretch reads CLQVMWLADR…SLKEIGENVH (93 aa). Kelch repeat units follow at residues 264-310, 311-353, 356-403, 405-455, and 457-505; these read HIYL…KHGG, DLYV…SVPG, AIYS…NLNG, IYLL…VHKD, and VFIV…YVFR.

Component of the BCR(KBTBD4) E3 ubiquitin ligase complex, at least composed of CUL3, KBTBD4 and RBX1.

Functionally, substrate-specific adapter of a BCR (BTB-CUL3-RBX1) E3 ubiquitin ligase complex which targets CoREST corepressor complex components RCOR1, KDM1A/LSD1 and HDAC2 for proteasomal degradation. RCOR1 is likely to be the primary target while degradation of KDM1A and HDAC2 is likely due to their association with RCOR1. Also targets RCOR3, MIER2 and MIER3 for proteasomal degradation as well as associated proteins ZNF217 and RREB1. Degradation is dependent on the presence of an ELM2 domain in the target proteins. This Macaca fascicularis (Crab-eating macaque) protein is Kelch repeat and BTB domain-containing protein 4 (KBTBD4).